A 501-amino-acid chain; its full sequence is Glutamyl-tRNA(Gln) amidotransferase subunit A (501 aa).

Residues Lys80 and Ser155 each act as charge relay system in the active site. The Acyl-ester intermediate role is filled by Ser179.

This sequence belongs to the amidase family. GatA subfamily. As to quaternary structure, heterotrimer of A, B and C subunits.

The enzyme catalyses L-glutamyl-tRNA(Gln) + L-glutamine + ATP + H2O = L-glutaminyl-tRNA(Gln) + L-glutamate + ADP + phosphate + H(+). Allows the formation of correctly charged Gln-tRNA(Gln) through the transamidation of misacylated Glu-tRNA(Gln) in organisms which lack glutaminyl-tRNA synthetase. The reaction takes place in the presence of glutamine and ATP through an activated gamma-phospho-Glu-tRNA(Gln). This chain is Glutamyl-tRNA(Gln) amidotransferase subunit A, found in Cupriavidus taiwanensis (strain DSM 17343 / BCRC 17206 / CCUG 44338 / CIP 107171 / LMG 19424 / R1) (Ralstonia taiwanensis (strain LMG 19424)).